Here is a 373-residue protein sequence, read N- to C-terminus: Integrator complex subunit 15 (373 aa).

Belongs to the Integrator subunit 15 family. Belongs to the multiprotein complex Integrator, at least composed of IntS1, IntS2, IntS3, IntS4, omd/IntS5, IntS6, defl/IntS7, IntS8, IntS9, IntS10, IntS11, IntS12, asun/IntS13, IntS14 and IntS15. The core complex associates with protein phosphatase 2A subunits mts/PP2A and Pp2A-29B, to form the Integrator-PP2A (INTAC) complex.

Its subcellular location is the nucleus. In terms of biological role, component of the integrator complex, a multiprotein complex that terminates RNA polymerase II (Pol II) transcription in the promoter-proximal region of genes. The integrator complex provides a quality checkpoint during transcription elongation by driving premature transcription termination of transcripts that are unfavorably configured for transcriptional elongation: the complex terminates transcription by (1) catalyzing dephosphorylation of the C-terminal domain (CTD) of Pol II subunit Rbp1 and Spt5, and (2) degrading the exiting nascent RNA transcript via endonuclease activity. The integrator complex is also involved in the 3'-end processing of the U7 snRNA, and also the spliceosomal snRNAs U1, U2, U4 and U5. In Drosophila melanogaster (Fruit fly), this protein is Integrator complex subunit 15.